The chain runs to 485 residues: Rhamnulokinase (485 aa).

11-15 contributes to the ATP binding site; that stretch reads ASSGR. Residues Ala-79 and 234-236 contribute to the substrate site; that span reads HDT. Asp-235 functions as the Proton acceptor in the catalytic mechanism. Thr-257 contacts ATP. Substrate is bound at residue Asn-294. Gln-302 and Gly-401 together coordinate ATP.

This sequence belongs to the rhamnulokinase family. It depends on Mg(2+) as a cofactor.

It catalyses the reaction L-rhamnulose + ATP = L-rhamnulose 1-phosphate + ADP + H(+). Its pathway is carbohydrate degradation; L-rhamnose degradation; glycerone phosphate from L-rhamnose: step 2/3. Its function is as follows. Involved in the catabolism of L-rhamnose (6-deoxy-L-mannose). Catalyzes the transfer of the gamma-phosphate group from ATP to the 1-hydroxyl group of L-rhamnulose to yield L-rhamnulose 1-phosphate. The protein is Rhamnulokinase of Ligilactobacillus salivarius (strain UCC118) (Lactobacillus salivarius).